Consider the following 339-residue polypeptide: 2,3,4,5-tetrahydropyridine-2,6-dicarboxylate N-succinyltransferase (339 aa).

Asp180 is a binding site for Mg(2+). Glu213 acts as the Acyl-anhydride intermediate in catalysis. Residues Arg215, Gly230, Ser233, Ala256, 271 to 272, Gly279, and Lys300 each bind succinyl-CoA; that span reads EA.

The protein belongs to the type 2 tetrahydrodipicolinate N-succinyltransferase family. As to quaternary structure, homotrimer.

It is found in the cytoplasm. The enzyme catalyses (S)-2,3,4,5-tetrahydrodipicolinate + succinyl-CoA + H2O = (S)-2-succinylamino-6-oxoheptanedioate + CoA. The protein operates within amino-acid biosynthesis; L-lysine biosynthesis via DAP pathway; LL-2,6-diaminopimelate from (S)-tetrahydrodipicolinate (succinylase route): step 1/3. In terms of biological role, catalyzes the conversion of the cyclic tetrahydrodipicolinate (THDP) into the acyclic N-succinyl-L-2-amino-6-oxopimelate using succinyl-CoA. In Bifidobacterium longum (strain NCC 2705), this protein is 2,3,4,5-tetrahydropyridine-2,6-dicarboxylate N-succinyltransferase.